The sequence spans 526 residues: Peptide chain release factor 3 (526 aa).

One can recognise a tr-type G domain in the interval 8 to 277; the sequence is GKRRTFAIIS…GLTDWAPAPQ (270 aa). GTP is bound by residues 17-24, 85-89, and 139-142; these read SHPDAGKT, DTPGH, and NKLD.

This sequence belongs to the TRAFAC class translation factor GTPase superfamily. Classic translation factor GTPase family. PrfC subfamily.

It is found in the cytoplasm. Functionally, increases the formation of ribosomal termination complexes and stimulates activities of RF-1 and RF-2. It binds guanine nucleotides and has strong preference for UGA stop codons. It may interact directly with the ribosome. The stimulation of RF-1 and RF-2 is significantly reduced by GTP and GDP, but not by GMP. This Aliivibrio fischeri (strain MJ11) (Vibrio fischeri) protein is Peptide chain release factor 3.